The chain runs to 562 residues: MAGRPGYSEVIFLYVVSVAVIARATDNMPVNKDVSKLFPLTLIHINDLHARFEETNMKSNVCTQKDQCIAGIARVYQKIKDLLKEYESKNPIYLNAGDNFQGTLWYNLLRWNVTADFIKKLKPAAMTLGNHEFDHTPKGLAPYLAELNKEGIPTIVANLVMNNDPDLKSSKIPKSIKLTVGKRKIGIIGVLYDKTHEIAQTGKVTLSNAVEAVRREAAALKKDNIDIIVVLSHCSYEEDKKIAAEAGDDIDVIVGAHSHSFLYSPDSKQPHDPKDKVEGPYPTLVESKNKRKIPIVQAKSFGKYVGRLTLYFDEEGEVKNWEGYPVFIDHKVQQDPQILKDLVPWRAKVEAIGSTVVGETMIELDRDSCRDQECTLGVLYADGFADQYTNDTFRPFAIIQAGNFRNPIKVGKITNGDIIEAAPFGSTADLIRLKGADIWDVAEHSFALDDEGRTNCLQVSGLRIVIDISKPVRSRVKKIEVMDYTNPKSDKLKPLDKEAEYYIVVPSYLADGKDGFSAMKRATARRTGPLDSDVFKNYVEKIKKVDNLKLGRVIVCKGSKCT.

An N-terminal signal peptide occupies residues Met-1–Ala-24. A divalent metal cation contacts are provided by Asp-47, His-49, and Asp-98. N-linked (GlcNAc...) asparagine glycosylation occurs at Asn-112. Positions 130, 233, and 257 each coordinate a divalent metal cation. AMP is bound at residue Arg-370. N-linked (GlcNAc...) asparagine glycosylation is present at Asn-390. AMP contacts are provided by Arg-405, Phe-424, and Asp-514.

This sequence belongs to the 5'-nucleotidase family. As to quaternary structure, (Microbial infection) Interacts with Zika virus envelope protein E and Zika virus-like particles; the interaction does not affect Zika virus replication in human endothelial cells and keratinocytes. Requires a divalent metal cation as cofactor. Post-translationally, the N-terminus is blocked. Female saliva (at protein level). Female salivary gland (at protein level). Not detected or low-level expression in female carcasses without salivary glands. Not detected in male tissues.

It is found in the secreted. The catalysed reaction is a ribonucleoside 5'-triphosphate + 2 H2O = a ribonucleoside 5'-phosphate + 2 phosphate + 2 H(+). In terms of biological role, facilitates hematophagy by preventing ADP-, collagen- and thrombin-dependent platelet aggregation in the host. Cleaves adenosine triphosphate (ATP) and adenosine diphosphate (ADP) to adenosine monophosphate (AMP) and inorganic phosphate. May reduce probing time by facilitating the speed of locating blood. Functionally, (Microbial infection) Does not affect Zika virus replication in human endothelial cells and keratinocytes. The polypeptide is Apyrase (Aedes aegypti (Yellowfever mosquito)).